Here is a 250-residue protein sequence, read N- to C-terminus: Anti-Pycsar protein Apyc1 (250 aa).

Residues 19-220 form a beta-lactamase-like region; the sequence is YNNNALVKCN…AVQEMIMLMH (202 aa). Positions 61, 63, 65, 66, 146, 166, and 220 each coordinate Zn(2+).

This sequence belongs to the anti-Pycsar protein Apyc1 family. As to quaternary structure, homodimer. The cofactor is Zn(2+).

The enzyme catalyses 3',5'-cyclic CMP + H2O = CMP + H(+). The catalysed reaction is 3',5'-cyclic UMP + H2O = UMP + H(+). Functionally, counteracts the endogenous Pycsar antiviral defense system. Phosphodiesterase that enables metal-dependent hydrolysis of host cyclic nucleotide Pycsar defense signals such as cCMP and cUMP. The polypeptide is Anti-Pycsar protein Apyc1 (Paenibacillus xerothermodurans).